The chain runs to 437 residues: Ribosomal protein uS12 methylthiotransferase RimO (437 aa).

The 116-residue stretch at Thr-9–Ala-124 folds into the MTTase N-terminal domain. Cys-18, Cys-56, Cys-90, Cys-151, Cys-155, and Cys-158 together coordinate [4Fe-4S] cluster. In terms of domain architecture, Radical SAM core spans Thr-137–Glu-367. The TRAM domain occupies Glu-370–Lys-437.

Belongs to the methylthiotransferase family. RimO subfamily. It depends on [4Fe-4S] cluster as a cofactor.

Its subcellular location is the cytoplasm. The catalysed reaction is L-aspartate(89)-[ribosomal protein uS12]-hydrogen + (sulfur carrier)-SH + AH2 + 2 S-adenosyl-L-methionine = 3-methylsulfanyl-L-aspartate(89)-[ribosomal protein uS12]-hydrogen + (sulfur carrier)-H + 5'-deoxyadenosine + L-methionine + A + S-adenosyl-L-homocysteine + 2 H(+). Catalyzes the methylthiolation of an aspartic acid residue of ribosomal protein uS12. In Cytophaga hutchinsonii (strain ATCC 33406 / DSM 1761 / CIP 103989 / NBRC 15051 / NCIMB 9469 / D465), this protein is Ribosomal protein uS12 methylthiotransferase RimO.